The primary structure comprises 517 residues: Ribose import ATP-binding protein RbsA 2 (517 aa).

ABC transporter domains follow at residues 11 to 251 (LEMR…VGRD) and 263 to 507 (YDPG…ALAT). 43-50 (GENGAGKS) is an ATP binding site.

It belongs to the ABC transporter superfamily. Ribose importer (TC 3.A.1.2.1) family. In terms of assembly, the complex is composed of an ATP-binding protein (RbsA), two transmembrane proteins (RbsC) and a solute-binding protein (RbsB).

The protein localises to the cell inner membrane. It catalyses the reaction D-ribose(out) + ATP + H2O = D-ribose(in) + ADP + phosphate + H(+). In terms of biological role, part of the ABC transporter complex RbsABC involved in ribose import. Responsible for energy coupling to the transport system. The polypeptide is Ribose import ATP-binding protein RbsA 2 (Burkholderia pseudomallei (strain 1710b)).